A 160-amino-acid chain; its full sequence is MAPK regulated corepressor interacting protein 2 (160 aa).

Met1 bears the N-acetylmethionine mark. The segment at 1-22 (MYTITKGPSKLVAQRRTGPTQQ) is disordered. Arg35 carries the omega-N-methylarginine modification. Residues 43–64 (LPAHLQPSAQTQGPWPLASSGP) are disordered. The residue at position 61 (Ser61) is a Phosphoserine. Arg65 carries the omega-N-methylarginine modification. A Phosphoserine modification is found at Ser82.

Belongs to the MCRIP family. As to quaternary structure, interacts with DDX6. Interacts with MCRIP1.

It localises to the cytoplasm. Its subcellular location is the stress granule. The protein localises to the nucleus. This chain is MAPK regulated corepressor interacting protein 2 (Mcrip2), found in Mus musculus (Mouse).